A 296-amino-acid polypeptide reads, in one-letter code: Ribosome biogenesis GTPase A (296 aa).

The 165-residue stretch at 14 to 178 (RRQVTEKLKL…LLDTPGILWP (165 aa)) folds into the CP-type G domain. GTP is bound by residues 58-61 (NKAD), 130-135 (NVGKST), and G174.

This sequence belongs to the TRAFAC class YlqF/YawG GTPase family. MTG1 subfamily. In terms of assembly, interacts with ctc. Interacts with the immature 50S ribosome subunit. 2 molecules of rbgA bind to one 50S subunit.

Its subcellular location is the cytoplasm. Functionally, essential protein that is required for a late step of 50S ribosomal subunit assembly. Has GTPase activity that is stimulated by interaction with the immature 50S ribosome subunit. Binds to the 23S rRNA. Required for the association of ribosomal proteins rplP and rpmA with the large subunit. This chain is Ribosome biogenesis GTPase A, found in Bacillus cereus (strain ATCC 14579 / DSM 31 / CCUG 7414 / JCM 2152 / NBRC 15305 / NCIMB 9373 / NCTC 2599 / NRRL B-3711).